The following is a 958-amino-acid chain: Protein translocase subunit SecA (958 aa).

Residues Q86, 104-108, and D494 contribute to the ATP site; that span reads GEGKT. Disordered regions lie at residues 863–883 and 902–937; these read AAAT…AEKT and QPIS…GTGK. 4 residues coordinate Zn(2+): C941, C943, C952, and H953.

The protein belongs to the SecA family. Monomer and homodimer. Part of the essential Sec protein translocation apparatus which comprises SecA, SecYEG and auxiliary proteins SecDF. Other proteins may also be involved. Requires Zn(2+) as cofactor.

It is found in the cell membrane. The protein resides in the cytoplasm. The enzyme catalyses ATP + H2O + cellular proteinSide 1 = ADP + phosphate + cellular proteinSide 2.. Its function is as follows. Part of the Sec protein translocase complex. Interacts with the SecYEG preprotein conducting channel. Has a central role in coupling the hydrolysis of ATP to the transfer of proteins into and across the cell membrane, serving as an ATP-driven molecular motor driving the stepwise translocation of polypeptide chains across the membrane. In Bifidobacterium adolescentis (strain ATCC 15703 / DSM 20083 / NCTC 11814 / E194a), this protein is Protein translocase subunit SecA.